Consider the following 38-residue polypeptide: Iota-conotoxin-like L11.5 (38 aa).

Intrachain disulfides connect Cys5-Cys19, Cys12-Cys24, Cys18-Cys29, and Cys23-Cys36.

Belongs to the conotoxin I1 superfamily. As to expression, expressed by the venom duct.

It is found in the secreted. Iota-conotoxins bind to voltage-gated sodium channels (Nav) and act as agonists by shifting the voltage-dependence of activation to more hyperpolarized levels. Produces general excitatory symptoms. This Conus lynceus (Lynceus cone) protein is Iota-conotoxin-like L11.5.